We begin with the raw amino-acid sequence, 124 residues long: Glutaredoxin-2 (124 aa).

The cysteines at positions 13 and 16 are disulfide-linked.

It belongs to the glutaredoxin family. In terms of assembly, homodimer.

It is found in the host cytoplasm. Glutaredoxin necessary for virion morphogenesis and virus replication. Functions as a thiol-disulfide transfer protein between membrane-associated OPG128 and substrates OPG095 or OPG053. The complete pathway for formation of disulfide bonds in intracellular virion membrane proteins sequentially involves oxidation of OPG072, OPG128 and OPG088. Exhibit thioltransferase and dehydroascorbate reductase activities in vitro. This Homo sapiens (Human) protein is Glutaredoxin-2 (OPG088).